A 376-amino-acid polypeptide reads, in one-letter code: TraB domain-containing protein (376 aa).

N-acetylmethionine is present on methionine 1. Threonine 64 bears the Phosphothreonine mark.

The polypeptide is TraB domain-containing protein (Trabd) (Mus musculus (Mouse)).